The following is a 249-amino-acid chain: Small ribosomal subunit protein uS3 (249 aa).

In terms of domain architecture, KH type-2 spans 39–107; the sequence is VRAMLKKRLY…EVHLNIVEIR (69 aa). A disordered region spans residues 215–249; it reads LDKRLATESGPAGEGGGRERGDRPDRGDRGRRDRG. The span at 230–249 shows a compositional bias: basic and acidic residues; the sequence is GGRERGDRPDRGDRGRRDRG.

The protein belongs to the universal ribosomal protein uS3 family. In terms of assembly, part of the 30S ribosomal subunit. Forms a tight complex with proteins S10 and S14.

Its function is as follows. Binds the lower part of the 30S subunit head. Binds mRNA in the 70S ribosome, positioning it for translation. The polypeptide is Small ribosomal subunit protein uS3 (Caulobacter sp. (strain K31)).